A 157-amino-acid polypeptide reads, in one-letter code: Ribosome maturation factor RimP (157 aa).

Belongs to the RimP family.

Its subcellular location is the cytoplasm. Required for maturation of 30S ribosomal subunits. This is Ribosome maturation factor RimP from Synechococcus sp. (strain CC9311).